A 485-amino-acid chain; its full sequence is Proline--tRNA ligase (485 aa).

The protein belongs to the class-II aminoacyl-tRNA synthetase family. ProS type 3 subfamily. Homodimer.

The protein localises to the cytoplasm. It carries out the reaction tRNA(Pro) + L-proline + ATP = L-prolyl-tRNA(Pro) + AMP + diphosphate. Catalyzes the attachment of proline to tRNA(Pro) in a two-step reaction: proline is first activated by ATP to form Pro-AMP and then transferred to the acceptor end of tRNA(Pro). This chain is Proline--tRNA ligase, found in Aeropyrum pernix (strain ATCC 700893 / DSM 11879 / JCM 9820 / NBRC 100138 / K1).